The sequence spans 393 residues: Phosphoenolpyruvate/phosphate translocator 3, chloroplastic (393 aa).

The N-terminal 65 residues, 1 to 65, are a transit peptide targeting the chloroplast; it reads MQRAAAASRA…LSGGRAVTAR (65 aa). A run of 7 helical transmembrane segments spans residues 89-109, 124-144, 164-183, 195-217, 232-249, 270-290, and 362-382; these read LAET…NIYF, YTIT…MWAL, AAGH…KVAV, FFTV…LGSL, LSFN…NLLY, INLF…LMLF, and TPIS…VFLY. The EamA domain occupies 123–228; sequence PYTITAFQLA…PIVGGVALAS (106 aa).

Belongs to the TPT transporter family. PPT (TC 2.A.7.9) subfamily.

It localises to the plastid. The protein localises to the chloroplast membrane. In terms of biological role, phosphoenolpyruvate/phosphate translocator that transports phosphoenolpyruvate (PEP) and dihydroxyacetone phosphate. The chain is Phosphoenolpyruvate/phosphate translocator 3, chloroplastic (PPT3) from Oryza sativa subsp. japonica (Rice).